The sequence spans 342 residues: S-adenosylmethionine:tRNA ribosyltransferase-isomerase (342 aa).

The protein belongs to the QueA family. Monomer.

Its subcellular location is the cytoplasm. The enzyme catalyses 7-aminomethyl-7-carbaguanosine(34) in tRNA + S-adenosyl-L-methionine = epoxyqueuosine(34) in tRNA + adenine + L-methionine + 2 H(+). It functions in the pathway tRNA modification; tRNA-queuosine biosynthesis. In terms of biological role, transfers and isomerizes the ribose moiety from AdoMet to the 7-aminomethyl group of 7-deazaguanine (preQ1-tRNA) to give epoxyqueuosine (oQ-tRNA). The sequence is that of S-adenosylmethionine:tRNA ribosyltransferase-isomerase from Streptococcus agalactiae serotype III (strain NEM316).